Consider the following 147-residue polypeptide: Echinoidin (147 aa).

Residues 1-143 (GCCPTFWTSF…STRHYLICKL (143 aa)) form the C-type lectin domain. 3 disulfide bridges follow: C3-C14, C31-C141, and C116-C132. A glycan (O-linked (Hex) serine) is linked at S38. A Cell attachment site motif is present at residues 39–41 (RGD).

Homodimer; disulfide-linked. The identity of the saccharide is not reported in PubMed:3571253, and it is unlikely to be N-acetylgalactosamine. The sugar attached to Ser-38 is represented simply as Hex. As to expression, coelemic fluid.

Its subcellular location is the secreted. Role in the defense system of the organism against microorganisms. This lectin is specific for Gal-GalNAc. This Heliocidaris crassispina (Sea urchin) protein is Echinoidin.